A 736-amino-acid chain; its full sequence is Alpha-xylosidase A (736 aa).

An N-terminal signal peptide occupies residues Met-1–Ala-18. N-linked (GlcNAc...) asparagine glycosylation is found at Asn-24, Asn-279, Asn-332, and Asn-376. Asp-413 is an active-site residue. Asn-471 carries an N-linked (GlcNAc...) asparagine glycan. Catalysis depends on Asp-505, which acts as the Proton donor. N-linked (GlcNAc...) asparagine glycosylation is found at Asn-655, Asn-676, Asn-690, and Asn-701.

Belongs to the glycosyl hydrolase 31 family.

The protein resides in the secreted. The catalysed reaction is Hydrolysis of terminal, non-reducing alpha-D-xylose residues with release of alpha-D-xylose.. In terms of biological role, catalyzes the liberation of alpha-xylose from the non-reducing terminal glucose of xyloglucan oligosaccharides. This is Alpha-xylosidase A from Aspergillus niger (strain ATCC MYA-4892 / CBS 513.88 / FGSC A1513).